Consider the following 665-residue polypeptide: Protein kinase domain-containing protein ppk2 (665 aa).

Disordered stretches follow at residues 42–63 (PNDS…KKKF), 82–152 (GNST…LSRS), 187–217 (LNSQ…SSMN), and 286–343 (AESL…VGHP). Residues 82–104 (GNSTRSPPFHLQNQKSNGQSEVW) show a composition bias toward polar residues. Composition is skewed to low complexity over residues 137–152 (SLSR…LSRS) and 206–217 (TNRLSSSTSSMN). Residues 294–316 (SATTIQQGDVSSYPLSRSVSTPV) are compositionally biased toward polar residues. Ser358 carries the phosphoserine modification. The 250-residue stretch at 388–637 (YTDFTKICQQ…NMLLETSSFL (250 aa)) folds into the Protein kinase domain. ATP contacts are provided by residues 394–402 (ICQQDTVGT) and Lys417.

The protein resides in the cytoplasm. This is Protein kinase domain-containing protein ppk2 (ppk2) from Schizosaccharomyces pombe (strain 972 / ATCC 24843) (Fission yeast).